The chain runs to 112 residues: UPF0375 protein R05A10.4 (112 aa).

The N-terminal stretch at 1-19 (MNLSIFSAIIFSITIASSA) is a signal peptide. The N-linked (GlcNAc...) asparagine glycan is linked to N59.

Belongs to the UPF0375 family.

The protein localises to the secreted. This Caenorhabditis elegans protein is UPF0375 protein R05A10.4.